The following is a 119-amino-acid chain: Ribonuclease (119 aa).

Lys-6 and Arg-9 together coordinate substrate. His-11 acts as the Proton acceptor in catalysis. 3 cysteine pairs are disulfide-bonded: Cys-26-Cys-81, Cys-40-Cys-92, and Cys-58-Cys-107. Substrate is bound by residues 41–45 (KFTNT) and Arg-82. The Proton donor role is filled by His-114.

It belongs to the pancreatic ribonuclease family. In terms of assembly, monomer. Interacts with and forms tight 1:1 complexes with RNH1. Dimerization of two such complexes may occur. Interaction with RNH1 inhibits this protein.

It is found in the secreted. The catalysed reaction is an [RNA] containing cytidine + H2O = an [RNA]-3'-cytidine-3'-phosphate + a 5'-hydroxy-ribonucleotide-3'-[RNA].. The enzyme catalyses an [RNA] containing uridine + H2O = an [RNA]-3'-uridine-3'-phosphate + a 5'-hydroxy-ribonucleotide-3'-[RNA].. Its function is as follows. Endonuclease that catalyzes the cleavage of RNA on the 3' side of pyrimidine nucleotides. Acts on single-stranded and double-stranded RNA. In Chelonia mydas (Green sea-turtle), this protein is Ribonuclease.